The chain runs to 1372 residues: Serine protease pic autotransporter (1372 aa).

An N-terminal signal peptide occupies residues 1–55 (MNKVYSLKYCPVTGGLIAVSELARRVIKKTCRRLTHILLAGIPAICLCYSQISQA). Residues 56 to 301 (GIVRSDIAYQ…NVIPTDYLNQ (246 aa)) form the Peptidase S6 domain. Active-site charge relay system residues include histidine 127, aspartate 155, and serine 258. Positions 1106-1372 (DTNGDAGAWA…AVNANFRYMF (267 aa)) constitute an Autotransporter domain.

In terms of processing, cleaved to release the mature protein from the outer membrane.

Its subcellular location is the periplasm. The protein resides in the secreted. It is found in the cell surface. The protein localises to the cell outer membrane. Functionally, involved in intestinal colonization, displays in vitro mucinolytic activity, serum resistance, and hemagglutination. Important to penetrate the intestinal mucus layer. This is Serine protease pic autotransporter (pic) from Escherichia coli O44:H18 (strain 042 / EAEC).